Reading from the N-terminus, the 213-residue chain is Riboflavin synthase (213 aa).

Lumazine-binding repeat units lie at residues 1 to 97 (MFTG…IGGH) and 98 to 195 (LMSG…VDTV). Residues 4-6 (GIV), 48-50 (CLT), 62-67 (DLMKET), 101-103 (GHI), Lys137, 146-148 (SLT), and 160-165 (HLIPET) each bind 2,4-dihydroxypteridine.

In terms of assembly, homotrimer. Unlike in B.subtilis, does not interact with 6,7-dimethyl-8-ribityllumazine synthase.

It carries out the reaction 2 6,7-dimethyl-8-(1-D-ribityl)lumazine + H(+) = 5-amino-6-(D-ribitylamino)uracil + riboflavin. It participates in cofactor biosynthesis; riboflavin biosynthesis; riboflavin from 2-hydroxy-3-oxobutyl phosphate and 5-amino-6-(D-ribitylamino)uracil: step 2/2. Functionally, catalyzes the dismutation of two molecules of 6,7-dimethyl-8-ribityllumazine, resulting in the formation of riboflavin and 5-amino-6-(D-ribitylamino)uracil. The chain is Riboflavin synthase (ribC) from Escherichia coli (strain K12).